A 912-amino-acid polypeptide reads, in one-letter code: Cadherin-2 (912 aa).

An N-terminal signal peptide occupies residues 1–28; sequence MCRIAGTPPRILPPLALMLLAALQQAPI. A propeptide spanning residues 29 to 164 is cleaved from the precursor; that stretch reads KATCEDMLCK…DSSHLKRQKR (136 aa). 5 consecutive Cadherin domains span residues 165–272, 273–387, 388–502, 503–609, and 610–720; these read DWVI…RPEF, LHQV…PPEF, TAMT…SPYF, VPNP…DNAP, and QVNP…DVDR. Residues 165–729 are Extracellular-facing; it reads DWVIPPINLP…RIVGAGLGTG (565 aa). Positions 175, 231, 233, 264, 265, 266, 267, and 268 each coordinate Ca(2+). N-linked (GlcNAc...) asparagine glycosylation occurs at asparagine 278. Residues aspartate 298, aspartate 300, and asparagine 306 each coordinate Ca(2+). N-linked (GlcNAc...) asparagine glycosylation is present at asparagine 330. Position 358 (aspartate 358) interacts with Ca(2+). Residues asparagine 407, asparagine 578, asparagine 628, and asparagine 657 are each glycosylated (N-linked (GlcNAc...) asparagine). A helical transmembrane segment spans residues 730 to 752; that stretch reads AIIAILLCIIILLILVLMFVVWM. Over 753–912 the chain is Cytoplasmic; sequence KRRDKERQAK…LADMYGGGDD (160 aa). The span at 869–886 shows a compositional bias: low complexity; the sequence is SGSTAGSLSSLNSSSSGG. A disordered region spans residues 869–890; the sequence is SGSTAGSLSSLNSSSSGGEQDY.

Homodimer (via extracellular region). Can also form heterodimers with other cadherins (via extracellular region). Dimerization occurs in trans, i.e. with a cadherin chain from another cell. Interacts with CTNNA2. Expressed at intercalated disks in the heart (at protein level).

The protein localises to the cell membrane. The protein resides in the sarcolemma. Its subcellular location is the cell junction. It is found in the cell surface. It localises to the desmosome. The protein localises to the adherens junction. In terms of biological role, calcium-dependent cell adhesion protein; preferentially mediates homotypic cell-cell adhesion. Cadherins may thus contribute to the sorting of heterogeneous cell types, and thereby play an important role during embryonic development. Required for proper neurite branching, and pre- and postsynaptic organization. This Gallus gallus (Chicken) protein is Cadherin-2 (CDH2).